We begin with the raw amino-acid sequence, 286 residues long: ATP synthase gamma chain (286 aa).

Belongs to the ATPase gamma chain family. As to quaternary structure, F-type ATPases have 2 components, CF(1) - the catalytic core - and CF(0) - the membrane proton channel. CF(1) has five subunits: alpha(3), beta(3), gamma(1), delta(1), epsilon(1). CF(0) has three main subunits: a, b and c.

It localises to the cell inner membrane. In terms of biological role, produces ATP from ADP in the presence of a proton gradient across the membrane. The gamma chain is believed to be important in regulating ATPase activity and the flow of protons through the CF(0) complex. The sequence is that of ATP synthase gamma chain from Shewanella putrefaciens (strain CN-32 / ATCC BAA-453).